The chain runs to 786 residues: Exo-beta-D-glucosaminidase (786 aa).

Substrate-binding positions include Tyr-53, 102-103 (GE), 178-179 (DE), Glu-306, Glu-347, and Tyr-379. Residue Glu-179 is the Proton donor of the active site. The active-site Nucleophile is Glu-347.

This sequence belongs to the glycosyl hydrolase 35 family. Homodimer.

The protein localises to the cytoplasm. The catalysed reaction is beta-D-glucosaminyl-(1-&gt;4)-N-acetyl-D-glucosamine + H2O = D-glucosamine + N-acetyl-D-glucosamine. It functions in the pathway glycan degradation; chitin degradation. Its function is as follows. Exo-type enzyme that specifically cleaves the non-reducing terminal glycosidic bond of chitooligosaccharides. Catalyzes the hydrolysis of GlcN-GlcNAc to glucosamine (GlcN) and N-acetylglucosamine (GlcNAc). Involved in chitin degradation. Can also hydrolyze reduced chitobiose (GlcN2OH) and chitooligosaccharides of various chain lengths. This Thermococcus kodakarensis (strain ATCC BAA-918 / JCM 12380 / KOD1) (Pyrococcus kodakaraensis (strain KOD1)) protein is Exo-beta-D-glucosaminidase.